The sequence spans 314 residues: MKMSFALTFRSAKGRWIANPSQPCSKASIGLFVPASPPLDPEKVKELQRFITLSKRLLVMTGAGISTESGIPDYRSEKVGLYARTDRRPIQHGDFVRSAPIRQRYWARNFVGWPQFSSHQPNPAHWALSTWEKLGKLYWLVTQNVDALHTKAGSRRLTELHGCMDRVLCLDCGEQTPRGVLQERFQVLNPTWSAEAHGLAPDGDVFLSEEQVRSFQVPTCVQCGGHLKPDVVFFGDTVNPDKVDFVHKRVKEADSLLVVGSSLQVYSGYRFILTAWEKKLPIAILNIGPTRSDDLACLKLNSRCGELLPLIDPC.

The transit peptide at 1–28 directs the protein to the mitochondrion; sequence MKMSFALTFRSAKGRWIANPSQPCSKAS. One can recognise a Deacetylase sirtuin-type domain in the interval 37-314; it reads PPLDPEKVKE…GELLPLIDPC (278 aa). NAD(+)-binding positions include 62 to 82 and 143 to 146; these read GAGISTESGIPDYRSEKVGLY and QNVD. The active-site Proton acceptor is H161. Residues C169, C172, C220, and C223 each coordinate Zn(2+). Residues 260–262, 286–288, and C304 each bind NAD(+); these read GSS and NIG.

This sequence belongs to the sirtuin family. Class II subfamily. Interacts with GLUD1, IDE and SLC25A5. Interacts with DLAT and PDHX. Interacts with MCCC1 (via the biotin carboxylation domain). Interacts with PCCA and PC. The cofactor is Zn(2+). In terms of tissue distribution, detected in vascular smooth muscle and striated muscle. Detected in insulin-producing beta-cells in pancreas islets of Langerhans (at protein level). Widely expressed. Weakly expressed in leukocytes and fetal thymus.

It is found in the mitochondrion matrix. The enzyme catalyses N(6)-[(R)-lipoyl]-L-lysyl-[protein] + NAD(+) + H2O = 2''-O-lipoyl-ADP-D-ribose + nicotinamide + L-lysyl-[protein]. It catalyses the reaction N(6)-biotinyl-L-lysyl-[protein] + NAD(+) + H2O = 2''-O-biotinyl-ADP-D-ribose + nicotinamide + L-lysyl-[protein]. It carries out the reaction N(6)-acetyl-L-lysyl-[protein] + NAD(+) + H2O = 2''-O-acetyl-ADP-D-ribose + nicotinamide + L-lysyl-[protein]. The catalysed reaction is L-cysteinyl-[protein] + NAD(+) = S-(ADP-D-ribosyl)-L-cysteinyl-[protein] + nicotinamide + H(+). Acts as a NAD-dependent protein lipoamidase, biotinylase, deacetylase and ADP-ribosyl transferase. Catalyzes more efficiently removal of lipoyl- and biotinyl- than acetyl-lysine modifications. Inhibits the pyruvate dehydrogenase complex (PDH) activity via the enzymatic hydrolysis of the lipoamide cofactor from the E2 component, DLAT, in a phosphorylation-independent manner. Catalyzes the transfer of ADP-ribosyl groups onto target proteins, including mitochondrial GLUD1, inhibiting GLUD1 enzyme activity. Acts as a negative regulator of mitochondrial glutamine metabolism by mediating mono ADP-ribosylation of GLUD1: expressed in response to DNA damage and negatively regulates anaplerosis by inhibiting GLUD1, leading to block metabolism of glutamine into tricarboxylic acid cycle and promoting cell cycle arrest. In response to mTORC1 signal, SIRT4 expression is repressed, promoting anaplerosis and cell proliferation. Acts as a tumor suppressor. Also acts as a NAD-dependent protein deacetylase: mediates deacetylation of 'Lys-471' of MLYCD, inhibiting its activity, thereby acting as a regulator of lipid homeostasis. Does not seem to deacetylate PC. Controls fatty acid oxidation by inhibiting PPARA transcriptional activation. Impairs SIRT1-PPARA interaction probably through the regulation of NAD(+) levels. Down-regulates insulin secretion. This chain is NAD-dependent protein lipoamidase sirtuin-4, mitochondrial, found in Homo sapiens (Human).